The following is a 374-amino-acid chain: Tryptophan--tRNA ligase (374 aa).

A 'HIGH' region motif is present at residues 81-89 (PSGPVHIGH). A 'KMSKS' region motif is present at residues 258-262 (KMSAS).

It belongs to the class-I aminoacyl-tRNA synthetase family.

It localises to the cytoplasm. It carries out the reaction tRNA(Trp) + L-tryptophan + ATP = L-tryptophyl-tRNA(Trp) + AMP + diphosphate + H(+). The chain is Tryptophan--tRNA ligase from Pyrobaculum arsenaticum (strain DSM 13514 / JCM 11321 / PZ6).